We begin with the raw amino-acid sequence, 352 residues long: Histidinol-phosphate aminotransferase (352 aa).

Lys-221 bears the N6-(pyridoxal phosphate)lysine mark.

This sequence belongs to the class-II pyridoxal-phosphate-dependent aminotransferase family. Histidinol-phosphate aminotransferase subfamily. In terms of assembly, homodimer. Pyridoxal 5'-phosphate serves as cofactor.

It carries out the reaction L-histidinol phosphate + 2-oxoglutarate = 3-(imidazol-4-yl)-2-oxopropyl phosphate + L-glutamate. It functions in the pathway amino-acid biosynthesis; L-histidine biosynthesis; L-histidine from 5-phospho-alpha-D-ribose 1-diphosphate: step 7/9. This is Histidinol-phosphate aminotransferase from Staphylococcus aureus (strain MRSA252).